Reading from the N-terminus, the 283-residue chain is Pantothenate synthetase (283 aa).

30–37 (MGNLHLGH) is an ATP binding site. Histidine 37 serves as the catalytic Proton donor. Glutamine 61 provides a ligand contact to (R)-pantoate. Beta-alanine is bound at residue glutamine 61. 149–152 (GQKD) contacts ATP. Glutamine 155 is a binding site for (R)-pantoate. Residues isoleucine 178 and 186–189 (MSSR) contribute to the ATP site.

This sequence belongs to the pantothenate synthetase family. Homodimer.

The protein localises to the cytoplasm. It carries out the reaction (R)-pantoate + beta-alanine + ATP = (R)-pantothenate + AMP + diphosphate + H(+). It functions in the pathway cofactor biosynthesis; (R)-pantothenate biosynthesis; (R)-pantothenate from (R)-pantoate and beta-alanine: step 1/1. Functionally, catalyzes the condensation of pantoate with beta-alanine in an ATP-dependent reaction via a pantoyl-adenylate intermediate. The sequence is that of Pantothenate synthetase from Shewanella pealeana (strain ATCC 700345 / ANG-SQ1).